Reading from the N-terminus, the 180-residue chain is O-acetyl-ADP-ribose deacetylase (180 aa).

The Macro domain maps to 1–175 (MKPQIDVIHG…LYQRLLTQRG (175 aa)). Residues 11-12 (DI), Asn25, 33-35 (GVD), and 122-126 (STGVY) contribute to the substrate site. Asp35 acts as the Proton acceptor in catalysis.

This sequence belongs to the MacroD-type family. YmdB subfamily. As to quaternary structure, homodimer. Interacts with RNase III.

The enzyme catalyses 3''-O-acetyl-ADP-D-ribose + H2O = ADP-D-ribose + acetate + H(+). It catalyses the reaction 2''-O-acetyl-ADP-D-ribose + H2O = ADP-D-ribose + acetate + H(+). Its function is as follows. Deacetylates O-acetyl-ADP ribose to yield ADP-ribose and free acetate. Down-regulates ribonuclease 3 (RNase III) activity. Acts by interacting directly with the region of the ribonuclease that is required for dimerization/activation. The chain is O-acetyl-ADP-ribose deacetylase from Enterobacter cloacae subsp. cloacae (strain ATCC 13047 / DSM 30054 / NBRC 13535 / NCTC 10005 / WDCM 00083 / NCDC 279-56).